A 291-amino-acid polypeptide reads, in one-letter code: ATP synthase gamma chain (291 aa).

It belongs to the ATPase gamma chain family. As to quaternary structure, F-type ATPases have 2 components, CF(1) - the catalytic core - and CF(0) - the membrane proton channel. CF(1) has five subunits: alpha(3), beta(3), gamma(1), delta(1), epsilon(1). CF(0) has three main subunits: a, b and c.

It is found in the cell inner membrane. Its function is as follows. Produces ATP from ADP in the presence of a proton gradient across the membrane. The gamma chain is believed to be important in regulating ATPase activity and the flow of protons through the CF(0) complex. This is ATP synthase gamma chain from Burkholderia mallei (strain NCTC 10247).